The chain runs to 1442 residues: ABC transporter G family member 11 (1442 aa).

An ABC transporter 1 domain is found at 125–373 (LFTPSFWTKK…FMSLGFDCEP (249 aa)). The 241-residue stretch at 478–718 (LNDKFGMYSK…EQGSLYFKGD (241 aa)) folds into the ABC transmembrane type-2 1 domain. Helical transmembrane passes span 482–502 (FGMY…ASLF), 518–538 (AILS…AMTF), 567–587 (IPFT…MFGL), 592–612 (GKFF…TALF), 627–647 (NISN…IPIP), and 737–757 (IIVY…MEYI). The region spanning 808–1052 (FTWQNIRYTV…LTSYFERHGV (245 aa)) is the ABC transporter 2 domain. ATP is bound at residue 844-851 (GSSGAGKT). In terms of domain architecture, ABC transmembrane type-2 2 spans 1144 to 1369 (YYTYGSFVQA…YNTCQNYTSA (226 aa)). The next 6 helical transmembrane spans lie at 1147–1167 (YGSF…FWNL), 1181–1201 (IFEA…QLII), 1220–1240 (FAIS…TIFF), 1259–1279 (FYFW…GQAV), 1286–1306 (MFFA…FCGV), and 1416–1436 (VGII…FVYL).

Belongs to the ABC transporter superfamily. ABCG family. PDR (TC 3.A.1.205) subfamily.

The protein resides in the membrane. In Dictyostelium discoideum (Social amoeba), this protein is ABC transporter G family member 11 (abcG11).